A 393-amino-acid chain; its full sequence is NAD(P)H-quinone oxidoreductase subunit H, chloroplastic (393 aa).

The protein belongs to the complex I 49 kDa subunit family. In terms of assembly, NDH is composed of at least 16 different subunits, 5 of which are encoded in the nucleus.

It localises to the plastid. It is found in the chloroplast thylakoid membrane. It carries out the reaction a plastoquinone + NADH + (n+1) H(+)(in) = a plastoquinol + NAD(+) + n H(+)(out). The enzyme catalyses a plastoquinone + NADPH + (n+1) H(+)(in) = a plastoquinol + NADP(+) + n H(+)(out). Its function is as follows. NDH shuttles electrons from NAD(P)H:plastoquinone, via FMN and iron-sulfur (Fe-S) centers, to quinones in the photosynthetic chain and possibly in a chloroplast respiratory chain. The immediate electron acceptor for the enzyme in this species is believed to be plastoquinone. Couples the redox reaction to proton translocation, and thus conserves the redox energy in a proton gradient. This Platanus occidentalis (Sycamore) protein is NAD(P)H-quinone oxidoreductase subunit H, chloroplastic.